We begin with the raw amino-acid sequence, 61 residues long: Small ribosomal subunit protein uS14 (61 aa).

Zn(2+) is bound by residues Cys24, Cys27, Cys40, and Cys43.

Belongs to the universal ribosomal protein uS14 family. Zinc-binding uS14 subfamily. As to quaternary structure, part of the 30S ribosomal subunit. Contacts proteins S3 and S10. It depends on Zn(2+) as a cofactor.

Functionally, binds 16S rRNA, required for the assembly of 30S particles and may also be responsible for determining the conformation of the 16S rRNA at the A site. In Endomicrobium trichonymphae, this protein is Small ribosomal subunit protein uS14.